A 720-amino-acid chain; its full sequence is F-box/LRR-repeat MAX2 homolog (720 aa).

The region spanning 14-60 (SSAILDLPEPLLLHILSFLTDVRSRHRAALACGRMRAAERATRSELS) is the F-box domain. LRR repeat units lie at residues 71-134 (LFLS…QNAF), 135-158 (IAAR…DPTT), 159-189 (LANL…PDGA), 190-218 (DLEP…DVVR), 219-247 (ALTT…FKSS), 248-279 (ELGP…VGDD), 280-316 (ALLS…ITVA), 317-344 (GLVA…EAAP), 345-372 (AMEA…KASW), 373-398 (LHLD…LTDA), 399-435 (SLAA…TLRP), 436-452 (TLKE…HTAE), 453-510 (CLTA…KCRY), 511-537 (MEFD…LLSP), 538-571 (LISA…PRTI), 572-606 (FGLS…GQMD), 607-644 (LSLW…SLTL), and 645-720 (PAVG…QIDD).

As to quaternary structure, associates to a SCF (SKP1-CUL1-F-box protein) E3 ubiquitin-protein ligase complex. Interacts with D14 in a strigolactone-dependent manner. Interacts with SKP1, SKP5 and SKP20. Expressed in leaves. Expressed in roots, culms, leaf blades, leaf sheaths, shoot bases and panicles.

It is found in the nucleus. In terms of biological role, involved in strigolactone (SL) signaling. Required for responses to SLs and the establishment of arbuscular mycorrhiza symbiosis in rice. Strigolactone-dependent association of D3 with D14 and D53 (a repressor of SL signaling) triggers D53 ubiquitination and degradation. Controls tillering by suppressing axillary bud activity. Tiller is a specialized grain-bearing branch that is formed on the unelongated basal internode and grows independently of the mother stem (culm) by means of its own adventitious roots. The sequence is that of F-box/LRR-repeat MAX2 homolog from Oryza sativa subsp. japonica (Rice).